A 108-amino-acid polypeptide reads, in one-letter code: Nascent polypeptide-associated complex protein (108 aa).

Residues 1–68 (MNPREIRRMM…LREVKKEVEQ (68 aa)) form the NAC-A/B domain.

Belongs to the NAC-alpha family. In terms of assembly, homodimer. Interacts with the ribosome. Binds ribosomal RNA.

Its function is as follows. Contacts the emerging nascent chain on the ribosome. The chain is Nascent polypeptide-associated complex protein from Picrophilus torridus (strain ATCC 700027 / DSM 9790 / JCM 10055 / NBRC 100828 / KAW 2/3).